The following is a 495-amino-acid chain: Mothers against decapentaplegic homolog 6 (495 aa).

Basic residues predominate over residues Met1 to Arg15. Disordered stretches follow at residues Met1 to Leu115 and Ala133 to Glu161. Dimethylated arginine; alternate occurs at positions 74 and 81. An omega-N-methylarginine; alternate mark is found at Arg74 and Arg81. The MH1 domain occupies Pro149–Pro276. Lys174 is covalently cross-linked (Glycyl lysine isopeptide (Lys-Gly) (interchain with G-Cter in ubiquitin)). Residues Cys206, Cys248, Cys261, and His266 each contribute to the Zn(2+) site. Residues Trp332–Arg495 form the MH2 domain. Ser436 is modified (phosphoserine; by PRKX; in vitro).

Belongs to the dwarfin/SMAD family. In terms of assembly, interacts with NEDD4L. Interacts with WWP1. Interacts with STAMBP and PRKX. Interacts with RNF111 and AXIN1. Interacts with TGF-beta type I receptor superfamily members, including ACVR1B, BMPR1B and TGFBR1. In response to BMP2 treatment, interacts with SMAD1; this interaction may inhibit SMAD1-binding to SMAD4. Interacts with HOXC8 and HOXC9. Interacts with PELI1; this interaction interferes with PELI1 complex formation with TRAF6, IRAK1, IRAK4 and MYD88 in response to IL1B and hence negatively regulates IL1R-TLR signaling. Interacts with TSC22D1/TSC-22. In terms of processing, monoubiquitinated at Lys-174 by the E2/E3 hybrid ubiquitin-protein ligase UBE2O, leading to reduced binding affinity for the activated BMP type I receptor ACVR1/ALK2, thereby enhancing BMP7 and regulating adipocyte differentiation. Ubiquitinated by WWP1. Ubiquitinated by ARK2C, promoting proteasomal degradation, leading to enhance the BMP-Smad signaling. Arginine methylation by PRMT1, which is recruited by BMPR2, initiates BMP-Induced signaling and induces dissociation from the BMPR1B receptor at the cell surface leading to derepress downstream Smad1/Smad5 signaling. Post-translationally, phosphorylated by BMP type 1 receptor kinase and by PRKX. Ubiquitous in various organs, with higher levels in lung.

The protein localises to the nucleus. Its function is as follows. Transforming growth factor-beta superfamily receptors signaling occurs through the Smad family of intracellular mediators. SMAD6 is an inhibitory Smad (i-Smad) that negatively regulates signaling downstream of type I transforming growth factor-beta. Acts as a mediator of TGF-beta and BMP anti-inflammatory activities. Suppresses IL1R-TLR signaling through its direct interaction with PEL1, preventing NF-kappa-B activation, nuclear transport and NF-kappa-B-mediated expression of pro-inflammatory genes. Blocks the BMP-SMAD1 signaling pathway by competing with SMAD4 for receptor-activated SMAD1-binding. Binds to regulatory elements in target promoter regions. The protein is Mothers against decapentaplegic homolog 6 (Smad6) of Mus musculus (Mouse).